The chain runs to 244 residues: MSFRGGRGGGGGFRGGRGGGGGGGFRGGRGGDRGGGFRGGRGGFGGGGRGGYDQGPPEEVVLVGVFSHQCQDDIVCNNTSGKIPYFNAPIYFKNKEQVGKIDEIFGSPGENGFSVTLSQGVKASSFEPESQLYIDPGKLLPVDRFLPQAGGGRGRGGRGRGGDRGGRGSDRGGRGGFGRGGGGGFRGGDRGGFGGGRGGFRGGDRGGFRGGRGGDFGGRGRGDFKRSYDGGSFGGQNNKRTKFE.

Disordered stretches follow at residues 1-53 (MSFR…GGYD) and 145-244 (FLPQ…TKFE). RGG-box stretches follow at residues 4 to 51 (RGGR…GRGG) and 153 to 222 (RGRG…RGRG). Positions 160-173 (RGGDRGGRGSDRGG) are enriched in basic and acidic residues. Composition is skewed to gly residues over residues 174–201 (RGGFGRGGGGGFRGGDRGGFGGGRGGFR) and 208–217 (FRGGRGGDFG). Residues 218-228 (GRGRGDFKRSY) show a composition bias toward basic and acidic residues.

Belongs to the GAR1 family. Component of the small nucleolar ribonucleoprotein particle containing H/ACA-type snoRNAs (H/ACA snoRNPs).

Its subcellular location is the nucleus. The protein resides in the nucleolus. Required for ribosome biogenesis. Part of a complex which catalyzes pseudouridylation of rRNA. This involves the isomerization of uridine such that the ribose is subsequently attached to C5, instead of the normal N1. Pseudouridine ('psi') residues may serve to stabilize the conformation of rRNAs. Involved in phase separation into sub-nucleolar condensates. Essential for normal development and also plays a role in fertility. This is Probable H/ACA ribonucleoprotein complex subunit 1-like protein from Caenorhabditis elegans.